A 205-amino-acid polypeptide reads, in one-letter code: GTP-binding protein yptV5 (205 aa).

Position 15–22 (15–22) interacts with GTP; sequence GDSGVGKT. Positions 37 to 45 match the Effector region motif; that stretch reads YKATIGADF. Residues 63–67 and 125–128 each bind GTP; these read DTAGQ and NKID. Residues Cys-204 and Cys-205 are each lipidated (S-geranylgeranyl cysteine).

It belongs to the small GTPase superfamily. Rab family.

Its subcellular location is the cell membrane. Protein transport. Probably involved in vesicular traffic. This is GTP-binding protein yptV5 (YPTV5) from Volvox carteri (Green alga).